A 261-amino-acid polypeptide reads, in one-letter code: Basic leucine zipper 19 (261 aa).

Disordered stretches follow at residues 1–22 (MEDG…MGEL) and 74–100 (ESDE…LGNR). Polar residues predominate over residues 8–18 (FSNQEVFSSSE). Residues 88–100 (CGKKGEKRPLGNR) are compositionally biased toward basic and acidic residues. The bZIP domain occupies 89–155 (GKKGEKRPLG…SRLKCLLVDL (67 aa)). The tract at residues 90-113 (KKGEKRPLGNREAVRKYREKKKAK) is basic motif. The tract at residues 117 to 131 (LEDEVARLRAVNQQL) is leucine-zipper. Low complexity predominate over residues 237-248 (NGSFSNVNTSVS). A disordered region spans residues 237–261 (NGSFSNVNTSVSNKRKGGHRASRAV). Basic residues predominate over residues 249–261 (NKRKGGHRASRAV).

It is found in the nucleus. In terms of biological role, transcription factor involved in the response to zinc ion deficiency. Binds to the consensus sequence 5'-[AG]TGTCGACA[CT]-3' also called zinc deficiency response element (ZDRE). The ZDRE sequence is conserved in the plant kingdom and present in the promoters of genes that constitute the primary response to zinc deficiency, comprising additional ZIP metal transporter genes. Required for zinc accumulation in roots. Mediates the expression of the zinc transporters ZIP3, ZIP4, ZIP5 and ZIP9 during growth in zinc-deficient conditions. ZIP9 transporter is involved in zinc uptake in roots. The protein is Basic leucine zipper 19 of Arabidopsis thaliana (Mouse-ear cress).